The chain runs to 348 residues: Dihydroorotase (348 aa).

2 residues coordinate Zn(2+): His-17 and His-19. Residues 19 to 21 and Asn-45 each bind substrate; that span reads HLR. 3 residues coordinate Zn(2+): Lys-103, His-140, and His-178. Lys-103 carries the N6-carboxylysine modification. His-140 lines the substrate pocket. A substrate-binding site is contributed by Leu-223. Asp-251 is a Zn(2+) binding site. The active site involves Asp-251. The substrate site is built by His-255 and Ala-267.

It belongs to the metallo-dependent hydrolases superfamily. DHOase family. Class II DHOase subfamily. In terms of assembly, homodimer. Requires Zn(2+) as cofactor.

It carries out the reaction (S)-dihydroorotate + H2O = N-carbamoyl-L-aspartate + H(+). It participates in pyrimidine metabolism; UMP biosynthesis via de novo pathway; (S)-dihydroorotate from bicarbonate: step 3/3. In terms of biological role, catalyzes the reversible cyclization of carbamoyl aspartate to dihydroorotate. This chain is Dihydroorotase, found in Yersinia enterocolitica serotype O:8 / biotype 1B (strain NCTC 13174 / 8081).